The chain runs to 376 residues: Glutamate 5-kinase (376 aa).

Lys18 contributes to the ATP binding site. Substrate-binding residues include Ser58, Asp145, and Asn157. Residues 177 to 178 (SD) and 218 to 224 (TGGMASK) contribute to the ATP site. In terms of domain architecture, PUA spans 280 to 358 (TGALTLDAGA…SELPGELRRP (79 aa)).

The protein belongs to the glutamate 5-kinase family.

The protein localises to the cytoplasm. The catalysed reaction is L-glutamate + ATP = L-glutamyl 5-phosphate + ADP. Its pathway is amino-acid biosynthesis; L-proline biosynthesis; L-glutamate 5-semialdehyde from L-glutamate: step 1/2. In terms of biological role, catalyzes the transfer of a phosphate group to glutamate to form L-glutamate 5-phosphate. This Mycobacterium tuberculosis (strain CDC 1551 / Oshkosh) protein is Glutamate 5-kinase.